The sequence spans 436 residues: Elongation factor 1-gamma-A (436 aa).

The region spanning 2 to 87 (AGGTLYTYPD…YVGNDELRGT (86 aa)) is the GST N-terminal domain. One can recognise a GST C-terminal domain in the interval 88–221 (TRLHQAQVIQ…KMAQFDAKKF (134 aa)). Composition is skewed to basic and acidic residues over residues 221–249 (FAEM…EKKK) and 265–278 (SEKA…SKDP). The segment at 221-278 (FAEMQPKKETPKKEKPAKEPKKEKEEKKKAAPTPAPAPEDDLDESEKALAAEPKSKDP) is disordered. Residues 275–436 (SKDPYAHLPK…KPFNQGKIFK (162 aa)) form the EF-1-gamma C-terminal domain.

As to quaternary structure, EF-1 is composed of four subunits: alpha, beta, delta, and gamma. Post-translationally, phosphorylated by CDK1. In terms of processing, the N-terminus is blocked.

Functionally, probably plays a role in anchoring the complex to other cellular components. The sequence is that of Elongation factor 1-gamma-A (eef1g-a) from Xenopus laevis (African clawed frog).